A 784-amino-acid chain; its full sequence is Probable aminopeptidase 1 (784 aa).

Substrate-binding positions include Glu103 and 236–240 (GAMEN). His271 lines the Zn(2+) pocket. Residue Glu272 is the Proton acceptor of the active site. Zn(2+)-binding residues include His275 and Glu294.

Belongs to the peptidase M1 family. Zn(2+) is required as a cofactor.

Its subcellular location is the cytoplasm. The polypeptide is Probable aminopeptidase 1 (ape1) (Saccharolobus solfataricus (strain ATCC 35092 / DSM 1617 / JCM 11322 / P2) (Sulfolobus solfataricus)).